Consider the following 224-residue polypeptide: tRNA (guanine-N(7)-)-methyltransferase (224 aa).

Residues Glu-54, Glu-79, Glu-106, and Asp-129 each contribute to the S-adenosyl-L-methionine site. Residue Asp-129 is part of the active site. Positions 133 and 165 each coordinate substrate.

It belongs to the class I-like SAM-binding methyltransferase superfamily. TrmB family.

The catalysed reaction is guanosine(46) in tRNA + S-adenosyl-L-methionine = N(7)-methylguanosine(46) in tRNA + S-adenosyl-L-homocysteine. The protein operates within tRNA modification; N(7)-methylguanine-tRNA biosynthesis. Catalyzes the formation of N(7)-methylguanine at position 46 (m7G46) in tRNA. This Chlamydia trachomatis serovar D (strain ATCC VR-885 / DSM 19411 / UW-3/Cx) protein is tRNA (guanine-N(7)-)-methyltransferase.